A 468-amino-acid polypeptide reads, in one-letter code: N-acyl-phosphatidylethanolamine-hydrolyzing phospholipase D, mitochondrial (468 aa).

The transit peptide at 1–39 (MNFVTCHVQMRLLLQRRLVRLRESELFRPQTSLSTFKRH) directs the protein to the mitochondrion. Residues 54 to 76 (YARILLLSVLVPYTGYAFYVSLA) form a helical membrane-spanning segment. 6 residues coordinate Zn(2+): H265, H267, D269, H270, H332, and H425.

Belongs to the NAPE-PLD family. It depends on Zn(2+) as a cofactor.

It localises to the mitochondrion membrane. It catalyses the reaction an N-acyl-1,2-diacyl-sn-glycero-3-phosphoethanolamine + H2O = an N-acylethanolamine + a 1,2-diacyl-sn-glycero-3-phosphate + H(+). In terms of biological role, hydrolyzes N-acyl-phosphatidylethanolamines (NAPEs) to produce N-acylethanolamines (NAEs). The sequence is that of N-acyl-phosphatidylethanolamine-hydrolyzing phospholipase D, mitochondrial (FMP30) from Saccharomyces cerevisiae (strain ATCC 204508 / S288c) (Baker's yeast).